We begin with the raw amino-acid sequence, 268 residues long: 3-methyl-2-oxobutanoate hydroxymethyltransferase (268 aa).

Residues Asp-41 and Asp-80 each coordinate Mg(2+). 3-methyl-2-oxobutanoate is bound by residues 41 to 42 (DS), Asp-80, and Lys-110. A Mg(2+)-binding site is contributed by Glu-112. Glu-178 functions as the Proton acceptor in the catalytic mechanism.

Belongs to the PanB family. As to quaternary structure, homodecamer; pentamer of dimers. It depends on Mg(2+) as a cofactor.

It localises to the cytoplasm. The catalysed reaction is 3-methyl-2-oxobutanoate + (6R)-5,10-methylene-5,6,7,8-tetrahydrofolate + H2O = 2-dehydropantoate + (6S)-5,6,7,8-tetrahydrofolate. It functions in the pathway cofactor biosynthesis; coenzyme A biosynthesis. Its function is as follows. Catalyzes the reversible reaction in which hydroxymethyl group from 5,10-methylenetetrahydrofolate is transferred onto alpha-ketoisovalerate to form ketopantoate. This Natronomonas pharaonis (strain ATCC 35678 / DSM 2160 / CIP 103997 / JCM 8858 / NBRC 14720 / NCIMB 2260 / Gabara) (Halobacterium pharaonis) protein is 3-methyl-2-oxobutanoate hydroxymethyltransferase.